Reading from the N-terminus, the 327-residue chain is Malate dehydrogenase (327 aa).

12 to 18 (GAAGQIG) is an NAD(+) binding site. Substrate is bound by residues Arg-93 and Arg-99. Residues Asn-106, Gln-113, and 130–132 (VGN) each bind NAD(+). Substrate is bound by residues Asn-132 and Arg-163. His-188 (proton acceptor) is an active-site residue.

The protein belongs to the LDH/MDH superfamily. MDH type 2 family.

It carries out the reaction (S)-malate + NAD(+) = oxaloacetate + NADH + H(+). In terms of biological role, catalyzes the reversible oxidation of malate to oxaloacetate. This Cupriavidus pinatubonensis (strain JMP 134 / LMG 1197) (Cupriavidus necator (strain JMP 134)) protein is Malate dehydrogenase.